We begin with the raw amino-acid sequence, 145 residues long: Putative type I specificity subunit S.MpnORF289P C-terminus (145 aa).

The protein belongs to the type-I restriction system S methylase family. The methyltransferase is composed of M and S polypeptides.

Functionally, the C-terminal section of a specificity (S) subunit of a type I methyltransferase (MTase); this subunit dictates DNA sequence specificity. The single R subunit has multiple frameshifts and is probably not expressed. The sequence is that of Putative type I specificity subunit S.MpnORF289P C-terminus from Mycoplasma pneumoniae (strain ATCC 29342 / M129 / Subtype 1) (Mycoplasmoides pneumoniae).